The following is a 699-amino-acid chain: SPS-sensor serine protease component SSY5 (699 aa).

Disordered regions lie at residues 1–113 (MVRF…LQGF) and 129–158 (VKEE…GNAR). The propeptide occupies 1–381 (MVRFFGLNKK…YCVKDYIKKA (381 aa)). The span at 24 to 38 (NEQNAAETSSSNVSG) shows a compositional bias: polar residues. The segment covering 39–51 (NEERIDPNSHDAN) has biased composition (basic and acidic residues). A compositionally biased stretch (low complexity) spans 52 to 78 (PENANNDDASTTFGSSIQSSSIFSRGR). Over residues 83 to 93 (TGASSSMATSE) the composition is skewed to polar residues. Composition is skewed to low complexity over residues 97 to 109 (HSSG…NSKN) and 144 to 154 (SSSTSSTLATS). Positions 459 to 699 (FAITCAHVVL…QWDIDPQLDG (241 aa)) are serine protease. Residues H465, D545, and S640 each act as charge relay system in the active site.

It belongs to the peptidase S64 family. As to quaternary structure, component of the plasma membrane SPS (SSY1-PTR3-SSY5) amino acid sensor complex. Post-translationally, the propeptide is autoproteolytically cleaved from the catalytic domain but remains associated, forming an inactive protease complex. This processing occurs even in the absence of signaling.

The protein localises to the cell membrane. Protease component of the SPS-sensor system, which regulates the expression of several amino acid-metabolizing enzymes and amino acid- and peptide-permeases in response to extracellular amino acid levels by controlling the activity of two transcription factors, STP1 and STP2. Catalyzes the activation of these transcription factors, which are synthesized as latent cytoplasmic precursors, by proteolytic removal of an N-terminal inhibitory domain containing cytoplasmic retention motifs. SSY5 binds as an inactive protease complex to STP1. In response to extracellular amino acids and dependent on the other SPS-sensor components, the inhibitory propeptide is induced to dissociate, and thereby enables the catalytic domain to process STP1. This is SPS-sensor serine protease component SSY5 (SSY5) from Saccharomyces cerevisiae (strain YJM789) (Baker's yeast).